The following is a 578-amino-acid chain: MTFSIENNKQVVLGEELGKLSDNERLKTQSNFLRGTIEQDLQDRITGGFTADNFQLIRFHGMYQQDDRDIRNERAKQKLEPLHNVMLRARMPGGIITPKQWLAIDKFATEHSLYGSIRLTTRQTFQFHGVLKPNIKLMHQTLNSIGIDSIATAGDVNRNVLCTTNPVESELHQEAYEWAKKISEHLLPKTKAYAEIWLDGEKVETTEDDEPILGKTYLPRKFKTTVVIPPQNDVDVHANDLNFVAIAENGKLIGFNVLVGGGLAMTHGDTSTYPRRADDFGYIPLEKTLDVAAAVVTTQRDWGNRSNRKNAKTKYTLDRVGTDVFKAEVEKRAGIKFEVSRPYEFTERGDRIGWVEGIDGKHHLTLFIENGRLLDYPGKPLKTGVAEIAKIHKGDFRMTANQNLIVAGVSKSNKAKIEKLAREHGLMDEGVSEQRKNSMACVAFPTCPLAMAEAERFLPQFVTDVEGILDKHGLDKEDNIILRVTGCPNGCGRAMLAEIGLVGKAPGRYNLHLGGNRGGTRVPKMYKENITEKQILEEIDQLVGRWANERLPNECFGDFTVRVGIIEEVIISKRDFYA.

Positions 441, 447, 487, and 491 each coordinate [4Fe-4S] cluster. Cys-491 is a siroheme binding site.

Belongs to the nitrite and sulfite reductase 4Fe-4S domain family. In terms of assembly, alpha(8)-beta(8). The alpha component is a flavoprotein, the beta component is a hemoprotein. It depends on siroheme as a cofactor. Requires [4Fe-4S] cluster as cofactor.

It catalyses the reaction hydrogen sulfide + 3 NADP(+) + 3 H2O = sulfite + 3 NADPH + 4 H(+). The protein operates within sulfur metabolism; hydrogen sulfide biosynthesis; hydrogen sulfide from sulfite (NADPH route): step 1/1. Its function is as follows. Component of the sulfite reductase complex that catalyzes the 6-electron reduction of sulfite to sulfide. This is one of several activities required for the biosynthesis of L-cysteine from sulfate. This is Sulfite reductase [NADPH] hemoprotein beta-component from Vibrio vulnificus (strain YJ016).